The chain runs to 162 residues: 6,7-dimethyl-8-ribityllumazine synthase (162 aa).

Residues F23, 61–63, and 85–87 contribute to the 5-amino-6-(D-ribitylamino)uracil site; these read AYE and AVI. Position 90 to 91 (90 to 91) interacts with (2S)-2-hydroxy-3-oxobutyl phosphate; it reads DT. The active-site Proton donor is H93. F118 lines the 5-amino-6-(D-ribitylamino)uracil pocket. (2S)-2-hydroxy-3-oxobutyl phosphate is bound at residue R132.

It belongs to the DMRL synthase family.

It catalyses the reaction (2S)-2-hydroxy-3-oxobutyl phosphate + 5-amino-6-(D-ribitylamino)uracil = 6,7-dimethyl-8-(1-D-ribityl)lumazine + phosphate + 2 H2O + H(+). Its pathway is cofactor biosynthesis; riboflavin biosynthesis; riboflavin from 2-hydroxy-3-oxobutyl phosphate and 5-amino-6-(D-ribitylamino)uracil: step 1/2. Catalyzes the formation of 6,7-dimethyl-8-ribityllumazine by condensation of 5-amino-6-(D-ribitylamino)uracil with 3,4-dihydroxy-2-butanone 4-phosphate. This is the penultimate step in the biosynthesis of riboflavin. The protein is 6,7-dimethyl-8-ribityllumazine synthase of Synechococcus sp. (strain CC9902).